We begin with the raw amino-acid sequence, 78 residues long: Conotoxin Cl11.1 (78 aa).

Residues 1-19 (MKLALTFLLILMILPLTTG) form the signal peptide. The propeptide occupies 20-33 (GKKSDNQALKRLGA). Intrachain disulfides connect Cys-47-Cys-61, Cys-54-Cys-66, Cys-60-Cys-70, and Cys-65-Cys-77.

The protein belongs to the conotoxin I1 superfamily. Expressed by the venom duct.

It localises to the secreted. The sequence is that of Conotoxin Cl11.1 from Californiconus californicus (California cone).